We begin with the raw amino-acid sequence, 170 residues long: Translocator protein 2 (170 aa).

5 helical membrane passes run 3-23 (LQGA…WLFT), 45-65 (VLLL…YLVW), 78-98 (LPLG…VLFF), 104-124 (GLAL…ALIW), and 130-150 (LAAL…ALTY).

It belongs to the TspO/BZRP family. Homotetramer. May also form homodimer. Expressed in erythrocytes (at protein level).

It localises to the endoplasmic reticulum membrane. The protein resides in the cell membrane. Functionally, cholesterol-binding protein involved in the redistribution of cholesterol from lipid droplets to the endoplasmic reticulum. Required to meet cholesterol demands during erythropoietic differentiation. May play a role in transport processes at the plasma membrane of erythrocytes, including regulating VDAC-mediated ATP export, and import of the heme precursors protoporphyrin IX and 5-aminolevulinic acid. This is Translocator protein 2 (TSPO2) from Homo sapiens (Human).